We begin with the raw amino-acid sequence, 242 residues long: Transcription factor TCP17 (242 aa).

Residues 33 to 91 form the TCP domain; sequence GKDRHSKVCTVRGLRDRRIRLSVMTAIQVYDLQERLGLSQPSKVIDWLLEVAKNDVDLL.

As to quaternary structure, interacts with SPL. In terms of tissue distribution, expressed in cotyledons, particularly in the vascular region, in leaves, roots, stems, buds, flowers and siliques.

It is found in the nucleus. Plays a pivotal role in the control of morphogenesis of shoot organs by negatively regulating the expression of boundary-specific genes such as CUC genes, probably through the induction of miRNA (e.g. miR164). Participates in ovule development. The protein is Transcription factor TCP17 (TCP17) of Arabidopsis thaliana (Mouse-ear cress).